A 374-amino-acid chain; its full sequence is Queuine tRNA-ribosyltransferase (374 aa).

The Proton acceptor role is filled by D89. Residues 89-93 (DSGGF), D143, Q187, and G214 contribute to the substrate site. Positions 245-251 (GVGKPED) are RNA binding. The active-site Nucleophile is the D264. Positions 269 to 273 (TRNAR) are RNA binding; important for wobble base 34 recognition. Residues C302, C304, C307, and H333 each contribute to the Zn(2+) site.

It belongs to the queuine tRNA-ribosyltransferase family. As to quaternary structure, homodimer. Within each dimer, one monomer is responsible for RNA recognition and catalysis, while the other monomer binds to the replacement base PreQ1. Zn(2+) serves as cofactor.

It carries out the reaction 7-aminomethyl-7-carbaguanine + guanosine(34) in tRNA = 7-aminomethyl-7-carbaguanosine(34) in tRNA + guanine. It participates in tRNA modification; tRNA-queuosine biosynthesis. Catalyzes the base-exchange of a guanine (G) residue with the queuine precursor 7-aminomethyl-7-deazaguanine (PreQ1) at position 34 (anticodon wobble position) in tRNAs with GU(N) anticodons (tRNA-Asp, -Asn, -His and -Tyr). Catalysis occurs through a double-displacement mechanism. The nucleophile active site attacks the C1' of nucleotide 34 to detach the guanine base from the RNA, forming a covalent enzyme-RNA intermediate. The proton acceptor active site deprotonates the incoming PreQ1, allowing a nucleophilic attack on the C1' of the ribose to form the product. After dissociation, two additional enzymatic reactions on the tRNA convert PreQ1 to queuine (Q), resulting in the hypermodified nucleoside queuosine (7-(((4,5-cis-dihydroxy-2-cyclopenten-1-yl)amino)methyl)-7-deazaguanosine). This chain is Queuine tRNA-ribosyltransferase, found in Shewanella oneidensis (strain ATCC 700550 / JCM 31522 / CIP 106686 / LMG 19005 / NCIMB 14063 / MR-1).